A 113-amino-acid chain; its full sequence is Gonadotropin subunit beta (113 aa).

6 disulfide bridges follow: Cys6–Cys54, Cys20–Cys69, Cys23–Cys107, Cys31–Cys85, Cys35–Cys87, and Cys90–Cys97. Asn10 carries N-linked (GlcNAc...) asparagine glycosylation.

It belongs to the glycoprotein hormones subunit beta family. As to quaternary structure, heterodimer of an alpha and a beta chain.

It localises to the secreted. Functionally, involved in gametogenesis and steroidogenesis. This Muraenesox cinereus (Daggertooth pike conger) protein is Gonadotropin subunit beta (cgb).